The chain runs to 374 residues: Translocating chain-associated membrane protein 1 (374 aa).

Residues 1-32 (MAIRKKSNKNPPVLSHEFVLQNHADIVSCLAM) lie on the Cytoplasmic side of the membrane. Residues 33–53 (LFLLGLMFEITAKGAIIFVAL) form a helical membrane-spanning segment. Topologically, residues 54–81 (QYNVTRPATEEQAAESASLYYYGIKDLA) are lumenal. The N-linked (GlcNAc...) asparagine glycan is linked to N56. The chain crosses the membrane as a helical span at residues 82 to 102 (TVFFYMLVAIIVHAIIQEYVL). The Cytoplasmic portion of the chain corresponds to 103–121 (DKINRRMHFSKTKHSKFNE). One can recognise a TLC domain in the interval 117–326 (SKFNESGQLS…NFQLRRWREH (210 aa)). The helical transmembrane segment at 122-142 (SGQLSAFYLFACVWGTFILVS) threads the bilayer. Topologically, residues 143–159 (ENYISDPTILWRAYPHN) are lumenal. A helical transmembrane segment spans residues 160-180 (LMTFQMKFFYISQLAYWLHAF). The Cytoplasmic segment spans residues 181 to 192 (PELYFQKTKKED). The helical transmembrane segment at 193 to 213 (IPRQLVYIGLYLFHIAGAYLL) threads the bilayer. Residue N214 is a topological domain, lumenal. Residues 215-235 (LNHLGLVLLVLHYFVEFLFHI) traverse the membrane as a helical segment. Residues 236-251 (SRLFYFSDEKYQKGFS) lie on the Cytoplasmic side of the membrane. Residues 252-272 (LWAVLFVLGRLLTLILSVLTV) traverse the membrane as a helical segment. At 273–297 (GFGLARAENQKLDFSTGNFNVLAVR) the chain is on the lumenal side. Residues 298 to 318 (IAVLASICITQAFMMWKFINF) traverse the membrane as a helical segment. Topologically, residues 319–374 (QLRRWREHSAFQAPPVKRKPAVTKGRSSRKGTENGVNGTVTSNGADSPRSRKEKSS) are cytoplasmic. Residues 333–374 (PVKRKPAVTKGRSSRKGTENGVNGTVTSNGADSPRSRKEKSS) form a disordered region. Basic residues predominate over residues 334 to 347 (VKRKPAVTKGRSSR). The span at 352–363 (NGVNGTVTSNGA) shows a compositional bias: polar residues. S365 bears the Phosphoserine mark.

The protein belongs to the TRAM family. Interacts with SEC61B. May interact with Derlin-1/DERL1. N-glycosylated.

It localises to the endoplasmic reticulum membrane. Involved in the translocation of nascent protein chains into or through the endoplasmic reticulum (ER) membrane by facilitating the proper chain positioning at the SEC61 channel. Regulates the exposure of nascent secretory protein chain to the cytosol during translocation into the ER. May affect the phospholipid bilayer in the vicinity of the lateral gate of the SEC61 channel, thereby facilitating ER protein transport. Intimately associates with transmembrane (TM) domain of nascent membrane proteins during the entire integration process into the ER membrane. Associates with the second TM domain of G-protein-coupled receptor opsin/OPSD nascent chain in the ER membrane, which may facilitate its integration into the membrane. Under conditions of ER stress, participates in the disposal of misfolded ER membrane proteins during the unfolded protein response (UPR), an integrated stress response (ISR) pathway, by selectively retrotranslocating misfolded ER-membrane proteins from the ER into the cytosol where they are ubiquitinated and degraded by the proteasome. In Rattus norvegicus (Rat), this protein is Translocating chain-associated membrane protein 1.